We begin with the raw amino-acid sequence, 544 residues long: Chaperonin GroEL (544 aa).

Residues 30 to 33 (TLGP), Lys51, 87 to 91 (DGTTT), Gly415, 479 to 481 (NAA), and Asp495 contribute to the ATP site.

Belongs to the chaperonin (HSP60) family. As to quaternary structure, forms a cylinder of 14 subunits composed of two heptameric rings stacked back-to-back. Interacts with the co-chaperonin GroES.

Its subcellular location is the cytoplasm. The catalysed reaction is ATP + H2O + a folded polypeptide = ADP + phosphate + an unfolded polypeptide.. Its function is as follows. Together with its co-chaperonin GroES, plays an essential role in assisting protein folding. The GroEL-GroES system forms a nano-cage that allows encapsulation of the non-native substrate proteins and provides a physical environment optimized to promote and accelerate protein folding. The polypeptide is Chaperonin GroEL (Acinetobacter baumannii (strain AB307-0294)).